A 243-amino-acid polypeptide reads, in one-letter code: Secreted RxLR effector protein 28 (243 aa).

The signal sequence occupies residues 1 to 26; that stretch reads MHVSRIIAHIALATAITATTVSPTDA. Residues 49 to 52 carry the RxLR motif; sequence RGLR. Positions 187-243 are disordered; sequence NVDEDKGQNFGHSVSGPPTTTLTGPHTKSGIPPFENLVAPAKGSMPNTRRNGYQFFE. Residues 199 to 216 show a composition bias toward low complexity; that stretch reads SVSGPPTTTLTGPHTKSG.

The protein belongs to the RxLR effector family.

The protein resides in the secreted. It localises to the host cytoplasm. The protein localises to the host nucleus. In terms of biological role, effector that significantly enhances susceptibilities of grapevine and tobacco to pathogens. Acts as a broad suppressor of cell death to interrupt plant immunity. Completely inhibits cell death induced by cell death-inducing proteins, including the PAMP elicitor INF1 from P.infestans. Reduces the transcriptional levels of the defense-related genes and impairs the H(2)O(2) accumulation in N.benthamiana. The polypeptide is Secreted RxLR effector protein 28 (Plasmopara viticola (Downy mildew of grapevine)).